Here is a 441-residue protein sequence, read N- to C-terminus: Xaa-Pro aminopeptidase (441 aa).

Residues aspartate 261, aspartate 272, histidine 355, glutamate 384, and glutamate 407 each coordinate Mn(2+).

It belongs to the peptidase M24B family. Homotetramer. Mn(2+) is required as a cofactor.

It localises to the cytoplasm. The enzyme catalyses Release of any N-terminal amino acid, including proline, that is linked to proline, even from a dipeptide or tripeptide.. This Escherichia coli (strain K12) protein is Xaa-Pro aminopeptidase (pepP).